The primary structure comprises 120 residues: MEAEVDKLELMFQKADSDLDYLQYRLEYEVKTNHPHSAGEKNAVTVLKELSAIKSRYQALCARFKAVSVEQKETKSCICATLNKTMTMIQELQKQTNLELTLLTEEEKAATEPLKSHMPD.

This sequence belongs to the SKA2 family. Component of the SKA complex, composed of SKA1, SKA2 and SKA3. The SKA complex is a homodimer organized around a central W-shaped coiled-coil structure, formed by the interacting domains of SKA1, SKA2, and SKA3, each end of the 'W' is extended further by the C-terminal microtubule-binding domains of SKA1 and SKA3; the complex forms extended structures on microtubules. May interact with NR3C1; the relevance of such interaction remains unclear in vivo. Interacts with the MIS12 complex subunit DSN1. Interacts with the NDC80 complex; the interaction is required to establish kinetochore-microtubule end-on attachments.

It is found in the cytoplasm. The protein localises to the cytoskeleton. The protein resides in the spindle. Its subcellular location is the chromosome. It localises to the centromere. It is found in the kinetochore. The protein localises to the microtubule organizing center. The protein resides in the centrosome. In terms of biological role, component of the SKA complex, a microtubule plus end-binding complex of the outer kinetochore that stabilizes spindle microtubule-kinetochore attachments, promotes alignment of chromosomes at the mitotic spindle equator (chromosome congression) and assists suppression of the spindle assembly checkpoint. Kinetochores, consisting of a centromere-associated inner segment and a microtubule-contacting outer segment, play a crucial role in chromosome segregation by mediating the physical connection between centromeric DNA and spindle microtubules. The outer kinetochore is made up of the ten-subunit KMN network complex, comprising the MIS12, NDC80 and KNL1 complexes, and auxiliary microtubule-associated components such as the SKA complex; together they connect the outer kinetochore with the inner kinetochore, bind microtubules, and mediate interactions with mitotic checkpoint proteins that delay anaphase until chromosomes are bioriented on the spindle. The SKA complex is loaded onto bioriented kinetochores and it facilitates chromosome congression by stabilizing microtubules together with MAPRE1, and end-on attachment of the NDC80 complex to depolymerizing spindle microtubules, thereby assisting the poleward-moving kinetochore in withstanding microtubule pulling forces. The complex associates with dynamic microtubule plus-ends and can track both depolymerizing and elongating microtubules. The complex recruits protein phosphatase 1 (PP1) to the kinetochore in prometaphase and metaphase, to oppose spindle assembly checkpoint signaling and promote the onset of anaphase. Binds directly to microtubules; but with a much lower affinity than SKA1. During meiosis the SKA complex stabilizes the meiotic spindle and is required for its migration to the cortex. The chain is SKA complex subunit 2 (Ska2) from Mus musculus (Mouse).